The sequence spans 240 residues: MDVARSEFFETGTPVACTSCQARHGVVCGALSKGQLRELNRHSLRRKIEAGCEIIAQGSESSFYSNIMRGVMKLCKVMPDGRQQIVGLQFAPDFVGRPFVRESTLSAEAATDSEICVFPRNLLDRMISETPELQRSLHDQALKELDAAREWMLTLGRRTAEEKVASLLHLIATHAEPQTATSTAFDLPLSRAEIADFLGLTIETVSRQMTRLRKIGVIRIENFRHIIVPDMDELERMISA.

The segment at 17-28 (CTSCQARHGVVC) is essential for the oxygen-regulated activity. The region spanning 158 to 232 (RTAEEKVASL…FRHIIVPDMD (75 aa)) is the HTH crp-type domain. A DNA-binding region (H-T-H motif) is located at residues 191–210 (RAEIADFLGLTIETVSRQMT).

Its function is as follows. Promotes the microaerobic and symbiotic induction of fixN, possibly by binding to the FNR consensus binding site upstream of fixN. In Rhizobium leguminosarum bv. viciae, this protein is Probable transcriptional activator (fnrN).